Here is a 1343-residue protein sequence, read N- to C-terminus: DNA-directed RNA polymerase subunit beta (1343 aa).

The protein belongs to the RNA polymerase beta chain family. In terms of assembly, the RNAP catalytic core consists of 2 alpha, 1 beta, 1 beta' and 1 omega subunit. When a sigma factor is associated with the core the holoenzyme is formed, which can initiate transcription.

The catalysed reaction is RNA(n) + a ribonucleoside 5'-triphosphate = RNA(n+1) + diphosphate. Its function is as follows. DNA-dependent RNA polymerase catalyzes the transcription of DNA into RNA using the four ribonucleoside triphosphates as substrates. The polypeptide is DNA-directed RNA polymerase subunit beta (Shewanella denitrificans (strain OS217 / ATCC BAA-1090 / DSM 15013)).